Reading from the N-terminus, the 458-residue chain is Protein adenylyltransferase FICD (458 aa).

Residues 1 to 23 (MILMPMASVVAVAEPKWVSVWGR) are Cytoplasmic-facing. A helical; Signal-anchor for type II membrane protein transmembrane segment spans residues 24-44 (FLWMTLLSMALGSLLALLLPL). Residues 45–458 (GAVEEQCLAV…GFKETLPVRP (414 aa)) lie on the Lumenal side of the membrane. O-AMP-serine; by autocatalysis is present on S79. T80 bears the O-AMP-threonine; by autocatalysis mark. TPR repeat units follow at residues 106-139 (AKAA…DPGF) and 140-173 (VDAL…SPFH). T183 bears the O-AMP-threonine; by autocatalysis mark. The short motif at 230–235 (TVAIEG) is the Inhibitory (S/T)XXXE(G/N) motif element. Residue E234 participates in ATP binding. N275 carries N-linked (GlcNAc...) asparagine glycosylation. The Fido domain occupies 285–420 (VTIDHMLEIH…VRPFIRFIAK (136 aa)). 316–319 (VGHH) serves as a coordination point for ATP. H363 is a catalytic residue. Residues 367-374 (DGNGRTSR), 399-400 (YY), and N407 contribute to the ATP site.

This sequence belongs to the fic family. As to quaternary structure, homodimer. Interacts with HD. Mg(2+) is required as a cofactor. Mn(2+) serves as cofactor. Post-translationally, auto-AMPylated in vitro.

It is found in the endoplasmic reticulum membrane. It carries out the reaction L-tyrosyl-[protein] + ATP = O-(5'-adenylyl)-L-tyrosyl-[protein] + diphosphate. The enzyme catalyses 3-O-(5'-adenylyl)-L-threonyl-[protein] + H2O = L-threonyl-[protein] + AMP + H(+). The catalysed reaction is L-threonyl-[protein] + ATP = 3-O-(5'-adenylyl)-L-threonyl-[protein] + diphosphate. With respect to regulation, the side chain of Glu-234 determines which of the two opposing activities (AMPylase or de-AMPylase) will take place. In response to endoplasmic reticulum stress, mediates de-AMPylase activity. Adenylyltransferase activity is inhibited by the inhibitory helix present at the N-terminus: Glu-234 binds ATP and competes with ATP-binding at Arg-374, thereby preventing adenylyltransferase activity. In unstressed cells, disengagement of Glu-234 promotes adenylyltransferase activity. Activation dissociates ATP-binding from Glu-234, allowing ordered binding of the entire ATP moiety with the alpha-phosphate in an orientation that is productive for accepting an incoming target hydroxyl side chain. Functionally, protein that can both mediate the addition of adenosine 5'-monophosphate (AMP) to specific residues of target proteins (AMPylation), and the removal of the same modification from target proteins (de-AMPylation), depending on the context. The side chain of Glu-231 determines which of the two opposing activities (AMPylase or de-AMPylase) will take place. Acts as a key regulator of the ERN1/IRE1-mediated unfolded protein response (UPR) by mediating AMPylation or de-AMPylation of HSPA5/BiP. In unstressed cells, acts as an adenylyltransferase by mediating AMPylation of HSPA5/BiP at 'Thr-518', thereby inactivating it. In response to endoplasmic reticulum stress, acts as a phosphodiesterase by mediating removal of ATP (de-AMPylation) from HSPA5/BiP at 'Thr-518', leading to restore HSPA5/BiP activity. Although it is able to AMPylate RhoA, Rac and Cdc42 Rho GTPases in vitro, Rho GTPases do not constitute physiological substrates. This is Protein adenylyltransferase FICD from Rattus norvegicus (Rat).